A 538-amino-acid polypeptide reads, in one-letter code: Bifunctional purine biosynthesis protein PurH (538 aa).

One can recognise an MGS-like domain in the interval 8–158 (IPAPDKVEIK…KNHAYVTTLT (151 aa)).

It belongs to the PurH family.

The enzyme catalyses (6R)-10-formyltetrahydrofolate + 5-amino-1-(5-phospho-beta-D-ribosyl)imidazole-4-carboxamide = 5-formamido-1-(5-phospho-D-ribosyl)imidazole-4-carboxamide + (6S)-5,6,7,8-tetrahydrofolate. The catalysed reaction is IMP + H2O = 5-formamido-1-(5-phospho-D-ribosyl)imidazole-4-carboxamide. It participates in purine metabolism; IMP biosynthesis via de novo pathway; 5-formamido-1-(5-phospho-D-ribosyl)imidazole-4-carboxamide from 5-amino-1-(5-phospho-D-ribosyl)imidazole-4-carboxamide (10-formyl THF route): step 1/1. The protein operates within purine metabolism; IMP biosynthesis via de novo pathway; IMP from 5-formamido-1-(5-phospho-D-ribosyl)imidazole-4-carboxamide: step 1/1. The polypeptide is Bifunctional purine biosynthesis protein PurH (Rhizobium johnstonii (strain DSM 114642 / LMG 32736 / 3841) (Rhizobium leguminosarum bv. viciae)).